The chain runs to 706 residues: B-cell lymphoma 6 protein (706 aa).

The BTB domain occupies 32 to 99 (TDVVIVVSRE…MYTSRLNLRE (68 aa)). Residues 317-349 (EPPNAPLNRKGLVSPQSPQKSDCQPNSPTESCS) are disordered. Residues 330-349 (SPQSPQKSDCQPNSPTESCS) are compositionally biased toward polar residues. Residues serine 333 and serine 343 each carry the phosphoserine; by MAPK1 modification. At serine 361 the chain carries Phosphoserine. Residues 376–379 (KKYK) are required for interaction with NuRD complex and for transcriptional repressor activity. Residue lysine 379 is modified to N6-acetyllysine. Phosphoserine is present on serine 404. The tract at residues 407–467 (AYTAPPACQP…PRSSSESHSP (61 aa)) is disordered. Residues 424–456 (DLQSPTKLSASGEDSTIPQASRLNNIVNRSMTG) show a composition bias toward polar residues. Positions 457–466 (SPRSSSESHS) are enriched in low complexity. 6 C2H2-type zinc fingers span residues 518 to 541 (FFCN…LQTH), 546 to 568 (YKCD…KTVH), 574 to 596 (YRCN…TRIH), 602 to 624 (YKCE…VLIH), 630 to 652 (YPCE…LRIH), and 658 to 681 (YHCE…RQKH).

Homodimer. Interacts (via BTB domain) with the corepressors BCOR, NCOR1 and SMRT/NCOR2; the interactions are direct. Forms preferably ternary complexes with BCOR and SMRT/NCOR2 on target gene promoters but, on enhancer elements, interacts with SMRT/NCOR2 and HDAC3 to repress proximal gene expression. Interacts with histone deacetylases HDAC2, HDAC5 and HDAC9 (via the catalytic domain). Interacts with ZBTB7 and BCL6B. Interacts with SCF(FBXO11) complex; the interaction is independent of phosphorylation and promotes ubiquitination. Interacts (when phosphorylated) with PIN1; the interaction is required for BCL6 degradation upon genotoxic stress. Interacts with ZBTB17; inhibits ZBTB17 transcriptional activity. Interacts with CTBP1, autoinhibits its transcriptional expression. Interacts with NOTCH1 NCID and SIRT1; leads to a epigenetic repression of selective NOTCH1-target genes. Interacts (nor via BTB domain neither acetylated) with the NuRD complex components CHD4, HDAC1, MBD3 and MTA3; the interaction with MTA3 inhibits BCL6 acetylation and is required for BCL6 transpriptional repression. In terms of processing, phosphorylated by MAPK1 in response to antigen receptor activation at Ser-333 and Ser-343. Phosphorylated by ATM in response to genotoxic stress. Phosphorylation induces its degradation by ubiquitin/proteasome pathway. Post-translationally, polyubiquitinated. Polyubiquitinated by SCF(FBXO11), leading to its degradation by the proteasome. Ubiquitinated by the SCF(FBXL17) complex, leading to its degradation by the proteasome: ubiquitination by the SCF(FBXL17) complex takes place when aberrant BTB domain dimers are formed. Acetylated at Lys-379 by EP300 which inhibits the interaction with NuRD complex and the transcriptional repressor function. Deacetylated by HDAC- and SIR2-dependent pathways. In terms of tissue distribution, expressed in germinal center T- and B-cells and in primary immature dendritic cells.

The protein localises to the nucleus. In terms of biological role, transcriptional repressor mainly required for germinal center (GC) formation and antibody affinity maturation which has different mechanisms of action specific to the lineage and biological functions. Forms complexes with different corepressors and histone deacetylases to repress the transcriptional expression of different subsets of target genes. Represses its target genes by binding directly to the DNA sequence 5'-TTCCTAGAA-3' (BCL6-binding site) or indirectly by repressing the transcriptional activity of transcription factors. In GC B-cells, represses genes that function in differentiation, inflammation, apoptosis and cell cycle control, also autoregulates its transcriptional expression and up-regulates, indirectly, the expression of some genes important for GC reactions, such as AICDA, through the repression of microRNAs expression, like miR155. An important function is to allow GC B-cells to proliferate very rapidly in response to T-cell dependent antigens and tolerate the physiological DNA breaks required for immunglobulin class switch recombination and somatic hypermutation without inducing a p53/TP53-dependent apoptotic response. In follicular helper CD4(+) T-cells (T(FH) cells), promotes the expression of T(FH)-related genes but inhibits the differentiation of T(H)1, T(H)2 and T(H)17 cells. Also required for the establishment and maintenance of immunological memory for both T- and B-cells. Suppresses macrophage proliferation through competition with STAT5 for STAT-binding motifs binding on certain target genes, such as CCL2 and CCND2. In response to genotoxic stress, controls cell cycle arrest in GC B-cells in both p53/TP53-dependedent and -independent manners. Besides, also controls neurogenesis through the alteration of the composition of NOTCH-dependent transcriptional complexes at selective NOTCH targets, such as HES5, including the recruitment of the deacetylase SIRT1 and resulting in an epigenetic silencing leading to neuronal differentiation. This chain is B-cell lymphoma 6 protein (BCL6), found in Homo sapiens (Human).